Reading from the N-terminus, the 377-residue chain is Nitric oxide reductase FlRd-NAD(+) reductase (377 aa).

This sequence belongs to the FAD-dependent oxidoreductase family. FAD serves as cofactor.

The protein localises to the cytoplasm. The catalysed reaction is 2 reduced [nitric oxide reductase rubredoxin domain] + NAD(+) + H(+) = 2 oxidized [nitric oxide reductase rubredoxin domain] + NADH. It participates in nitrogen metabolism; nitric oxide reduction. Its function is as follows. One of at least two accessory proteins for anaerobic nitric oxide (NO) reductase. Reduces the rubredoxin moiety of NO reductase. The protein is Nitric oxide reductase FlRd-NAD(+) reductase of Escherichia coli (strain SMS-3-5 / SECEC).